The sequence spans 142 residues: Large ribosomal subunit protein uL13 (142 aa).

The protein belongs to the universal ribosomal protein uL13 family. As to quaternary structure, part of the 50S ribosomal subunit.

In terms of biological role, this protein is one of the early assembly proteins of the 50S ribosomal subunit, although it is not seen to bind rRNA by itself. It is important during the early stages of 50S assembly. The sequence is that of Large ribosomal subunit protein uL13 from Pasteurella multocida (strain Pm70).